The sequence spans 251 residues: Lactose phosphotransferase system repressor (251 aa).

An HTH deoR-type domain is found at 3–58; sequence KHERLDEIAKLVNKKGTIRTNEIVEGLNVSDMTVRRDLIELENKGILTKIHGGARS. The H-T-H motif DNA-binding region spans 20–39; that stretch reads IRTNEIVEGLNVSDMTVRRD.

Repressor of the lactose catabolism operon. Galactose-6-phosphate is the inducer. In Staphylococcus aureus (strain NCTC 8325 / PS 47), this protein is Lactose phosphotransferase system repressor (lacR).